A 441-amino-acid chain; its full sequence is Proline--tRNA ligase (441 aa).

It belongs to the class-II aminoacyl-tRNA synthetase family. ProS type 2 subfamily. As to quaternary structure, homodimer.

The protein localises to the cytoplasm. It carries out the reaction tRNA(Pro) + L-proline + ATP = L-prolyl-tRNA(Pro) + AMP + diphosphate. Catalyzes the attachment of proline to tRNA(Pro) in a two-step reaction: proline is first activated by ATP to form Pro-AMP and then transferred to the acceptor end of tRNA(Pro). The chain is Proline--tRNA ligase from Afipia carboxidovorans (strain ATCC 49405 / DSM 1227 / KCTC 32145 / OM5) (Oligotropha carboxidovorans).